Here is a 431-residue protein sequence, read N- to C-terminus: CCA tRNA nucleotidyltransferase 1, mitochondrial (431 aa).

The N-terminal 31 residues, 1–31, are a transit peptide targeting the mitochondrion; it reads MWAKLFLRPSFVNRVHLTWSCRALLTMQLKT. ATP contacts are provided by Gly61 and Arg64. Positions 61 and 64 each coordinate CTP. 2 residues coordinate Mg(2+): Asp74 and Asp76. Arg148, Asp191, Arg194, Arg197, and Arg200 together coordinate ATP. Positions 148, 191, 194, 197, and 200 each coordinate CTP.

Belongs to the tRNA nucleotidyltransferase/poly(A) polymerase family. As to quaternary structure, monomer, and homodimer. Requires Mg(2+) as cofactor. In terms of tissue distribution, expressed ubiquitously during early embryogenesis.

The protein localises to the mitochondrion. Its subcellular location is the cytoplasm. It localises to the nucleus. The catalysed reaction is a tRNA precursor + 2 CTP + ATP = a tRNA with a 3' CCA end + 3 diphosphate. It catalyses the reaction a tRNA with a 3' CCA end + 2 CTP + ATP = a tRNA with a 3' CCACCA end + 3 diphosphate. Nucleotidyltransferase that catalyzes the addition and repair of the essential 3'-terminal CCA sequence in tRNAs, which is necessary for the attachment of amino acids to the 3' terminus of tRNA molecules, using CTP and ATP as substrates. tRNA 3'-terminal CCA addition is required both for tRNA processing and repair. Promotes tRNA repair and recycling downstream of the ribosome-associated quality control (RQC) pathway by mediating addition of the tRNA 3'-terminal CCA following cleavage by ankzf1 and repair by elac1. Also involved in tRNA surveillance by mediating tandem CCA addition to generate a CCACCA at the 3' terminus of unstable tRNAs and tRNA-like transcripts. While stable tRNAs receive only 3'-terminal CCA, unstable tRNAs beginning with GG are marked with CCACCA and rapidly degraded. The structural flexibility of RNA controls the choice between CCA versus CCACCA addition: following the first CCA addition cycle, nucleotide-binding to the active site triggers a clockwise screw motion, producing torque on the RNA. This ejects stable RNAs, whereas unstable RNAs are refolded while bound to the enzyme and subjected to a second CCA catalytic cycle. This is CCA tRNA nucleotidyltransferase 1, mitochondrial from Danio rerio (Zebrafish).